The chain runs to 1338 residues: MFLMPTSSELNSGQNFLTQWMTNPSRAGVILNRGFPILEADKEKRAAVDISTSFPIKGTHFSDSFSFINEEDSLLEEQKLESNSPYKPQSDKSETHTGFPCIKKGPQVAACHSAPGHQEENKNDFIPHLASEFKEGAYKDPLFKKLEQLKEVQQKKQEQLKRQQLEQLQRLMEEQEKLLTMVSGQCTLPGLSLLPDDQSQKHRSPGNTTTGERATCCFPSYVYPDPTQEETYASNILSHEQSNFCRTAHGDFVLTSKRASPNLFSEAQYQEAPVEKNNLKEENRNHPTGESILSCWEKVTEQIQEANDKNLQKHDDSSEVANIEERPIKAAIGERKQTFEDYLEEQIQLEEQELKQKQLKEAEGPLPIKAKPKQPFLKRGEGLARFTNAKSKFQKGKESKLVTNQSTSEDQPLFKMDRQQLQRKTALKNKELCADNPILKKDSKARTKSGSVTLSQKPKMLKCSNRKSLSPSGLKIQTGKKCDGQFRDQIKFEKKVTSNNKENVPECPKPCDTGCTGWNKTQGKDRLPLSTGPASRLAAKSPIRETMKESESSLDVSLQKKLETWEREKEKENLELDEFLFLEQAADEISFSSNSSFVLKILERDQQICKGHRMSSTPVKAVPQKTNPADPISHCNRSEDLDHTAREKESECEVAPKQLHSLSSADELREQPCKIRKAVQKSTSENQTEWNARDDEGVPNSDSSTNSEEQLDVTIKPSTEDRERGISSREDSPQVCDDKGPFKDTRTQEDKRRDVDLDLSDKDYSSDESSMESIKHKVSEPSRSSSLSMSKMDFDDERTWTDLEENLCNHDVVLGNESTYGTPQTCYPNNEIGILDKTIKRKIAPVKRGEDLSKSRRSRSPPTSELMMKFFPSLKPKPKSDSHLGNEPKLNINQDQPPGDNARSQVLREKIIELETEIEKFKAENASLAKLRIERESALEKLRKEIADFEQQKAKELARIEEFKKEEMRKLQKERKVFEKYTTAARTFPDKKEREEIQTLKQQIADLREDLKRKETKWSSTHSRLRSQIEMLVRENTDLREEIKVMERFRLDAWKRAEAIESSLEVEKKDKLANTXVRFQNSQISSGTQVEKYKKNYLPMQGNPPRRSKSAPPRDLGSLDKGQAASPREPPEPLNFPDPEYKEEEDQDIQGEISHPDGKVEKVYKNGCRVILFPNGTRKEVSADGKTITVTFFNGDVKQVMPDQRVIYYYAAAQTTHTTYPEGLEVLHFSSGQIEKHYPDGRKEITFPDQTVKNLFPDGQEESIFPDGTTVRVQRDGNKLIEFNNGQRELHTAQFKRREYPDGTVKTVYANGHQETKYRSGRIRVKDKEGNVLMDTEL.

Disordered stretches follow at residues Gln-78 to Phe-99 and Gly-190 to Gly-211. Ser-260 and Ser-317 each carry phosphoserine. The alpha/beta-tubulin binding stretch occupies residues Val-320 to Lys-395. 3 disordered regions span residues Thr-387–Lys-415, Pro-437–Lys-480, and Gln-522–Ser-552. Positions Leu-401 to Asp-410 are enriched in polar residues. Residue Ser-541 is modified to Phosphoserine. Basic and acidic residues predominate over residues Pro-542–Glu-551. A phosphoserine; by PLK2 mark is found at Ser-590 and Ser-596. 3 disordered regions span residues His-612–Ser-790, Val-846–Arg-903, and Thr-1088–Gly-1158. Over residues Asn-636–Glu-651 the composition is skewed to basic and acidic residues. The segment covering Gln-680–Trp-690 has biased composition (polar residues). Positions Ser-718–Ser-765 are enriched in basic and acidic residues. At Ser-760 the chain carries Phosphoserine. The span at Pro-781–Ser-790 shows a compositional bias: low complexity. The interaction with STIL stretch occupies residues Gln-896 to Leu-1338.

Belongs to the TCP10 family. As to quaternary structure, forms homodimers. Associates with microtubules plus ends; binds to beta-tubulin subunits exposed on microtubule outer surface at its distal tip; also associates with microtubule lattice. Associated with the gamma-tubulin complex. Interacts with the head domain of EPB41. Interacts with LYST. Interacts with CEP152 (via C-terminus). Interacts with STIL. Forms a complex with STIL and SASS6. Phosphorylation at Ser-590 and Ser-596 by PLK2 is required for procentriole formation and centriole elongation. Phosphorylation by PLK2 oscillates during the cell cycle: it increases at G1/S transition and decreases during the exit from mitosis. Phosphorylation at Ser-596 is also mediated by PLK4 but is not a critical step in PLK4 function in procentriole assembly.

It localises to the cytoplasm. Its subcellular location is the cytoskeleton. It is found in the microtubule organizing center. The protein resides in the centrosome. The protein localises to the centriole. Functionally, plays an important role in cell division and centrosome function by participating in centriole duplication. Inhibits microtubule nucleation from the centrosome. Involved in the regulation of slow processive growth of centriolar microtubules. Acts as microtubule plus-end tracking protein that stabilizes centriolar microtubules and inhibits microtubule polymerization and extension from the distal ends of centrioles. Required for centriole elongation and for STIL-mediated centriole amplification. Required for the recruitment of CEP295 to the proximal end of new-born centrioles at the centriolar microtubule wall during early S phase in a PLK4-dependent manner. May be involved in the control of centriolar-microtubule growth by acting as a regulator of tubulin release. In Pan troglodytes (Chimpanzee), this protein is Centrosomal P4.1-associated protein (CPAP).